A 500-amino-acid chain; its full sequence is Trans-cinnamate 4-monooxygenase (500 aa).

The chain crosses the membrane as a helical span at residues 3-23 (ALLVEKVLLGLFVAAVLALVV). (E)-cinnamate-binding positions include 213 to 218 (RSRLSQ) and Ala302. Cys442 contributes to the heme binding site.

Belongs to the cytochrome P450 family. It depends on heme as a cofactor. In terms of tissue distribution, expressed in roots and leaves.

It is found in the membrane. The catalysed reaction is (E)-cinnamate + reduced [NADPH--hemoprotein reductase] + O2 = (E)-4-coumarate + oxidized [NADPH--hemoprotein reductase] + H2O + H(+). Its pathway is phenylpropanoid metabolism; trans-4-coumarate biosynthesis; trans-4-coumarate from trans-cinnamate: step 1/1. Catalyzes the first oxidative step of the phenylpropanoid pathway in higher plants by transforming trans-cinnamate into p-coumarate. The compounds formed by this pathway are essential components for lignification, pollination, and defense against ultraviolet light, predators and pathogens. In Oryza sativa subsp. japonica (Rice), this protein is Trans-cinnamate 4-monooxygenase.